Consider the following 388-residue polypeptide: Pepsin A-3 (388 aa).

An N-terminal signal peptide occupies residues M1 to C15. The propeptide at I16–L62 is activation peptide. The region spanning Y76–A385 is the Peptidase A1 domain. D94 is an active-site residue. 2 disulfides stabilise this stretch: C107-C112 and C268-C272. Residue D277 is part of the active site. An intrachain disulfide couples C311 to C344.

It belongs to the peptidase A1 family.

The protein resides in the secreted. It carries out the reaction Preferential cleavage: hydrophobic, preferably aromatic, residues in P1 and P1' positions. Cleaves 1-Phe-|-Val-2, 4-Gln-|-His-5, 13-Glu-|-Ala-14, 14-Ala-|-Leu-15, 15-Leu-|-Tyr-16, 16-Tyr-|-Leu-17, 23-Gly-|-Phe-24, 24-Phe-|-Phe-25 and 25-Phe-|-Tyr-26 bonds in the B chain of insulin.. In terms of biological role, shows particularly broad specificity; although bonds involving phenylalanine and leucine are preferred, many others are also cleaved to some extent. The protein is Pepsin A-3 (PGA3) of Homo sapiens (Human).